We begin with the raw amino-acid sequence, 1218 residues long: ABC transporter NFT1 (1218 aa).

The Extracellular segment spans residues 1–29; that stretch reads MIKNGTCPYWERDDLSECARREYIEFKFP. N-linked (GlcNAc...) asparagine glycosylation occurs at Asn4. The helical transmembrane segment at 30–50 threads the bilayer; that stretch reads LFILLTGMIYAFCKVFRAFYL. Over 51–103 the chain is Cytoplasmic; the sequence is RGKNHTNEAPEFEEQGNGNHEYARFSVLRLKSAWESRSFCNVNNRSTFDKFKK. The helical transmembrane segment at 104–124 threads the bilayer; sequence FIEGAFIVLQLTIHLYILSSM. The Extracellular segment spans residues 125 to 130; it reads PMDNKK. Residues 131–151 traverse the membrane as a helical segment; that stretch reads FFHQGFLVQMFLWILLLVVIT. At 152-169 the chain is on the cytoplasmic side; it reads LRLISASQSFRWVLACKR. Residues 170-190 form a helical membrane-spanning segment; sequence DLWAVSFYSYASLFTLSILPL. The Extracellular portion of the chain corresponds to 191 to 201; the sequence is RSVFIGKIKDK. The chain crosses the membrane as a helical span at residues 202 to 222; sequence IMVKYIISETFIDLALLLLLS. Over 223-302 the chain is Cytoplasmic; that stretch reads TSSIEGTRYS…SSKKGRLLPN (80 aa). Residues 303 to 323 traverse the membrane as a helical segment; the sequence is IICYFKAVFISQLFLAFVSSF. An ABC transmembrane type-1 1 domain is found at 311-621; the sequence is FISQLFLAFV…IASTVSLLIQ (311 aa). Residues 324–351 lie on the Extracellular side of the membrane; that stretch reads LNFVPSLLMPRILSYVNDPKSKSWNLVS. The chain crosses the membrane as a helical span at residues 352 to 374; it reads LYVSSMLVSKIIATTCRGQGLFL. The Cytoplasmic portion of the chain corresponds to 375 to 449; sequence GEKGTMQLRT…VMSIDAFKVS (75 aa). The segment at 410-434 is disordered; that stretch reads NASTSFEENPDSSEAEPRKKSSRKD. The span at 424–434 shows a compositional bias: basic and acidic residues; sequence AEPRKKSSRKD. The helical transmembrane segment at 450 to 470 threads the bilayer; the sequence is EAMNTFYLACEAVFMTVTALM. The Extracellular segment spans residues 471–481; the sequence is ILYSLLGWSAF. A helical transmembrane segment spans residues 482–504; sequence AGTFALLAMIPLNFWCATFYGNY. The Cytoplasmic segment spans residues 505-558; it reads QADQLILTDKRTSGISEALNSIRVIKLLAWENLFYQKIINVRDGEIRLLKKKAT. Residues 559 to 579 traverse the membrane as a helical segment; that stretch reads IFFLNHLIWFFGPTLVSAITF. Residues 580–584 lie on the Extracellular side of the membrane; it reads SVFIK. A helical membrane pass occupies residues 585–605; the sequence is FQNQTLTPTIAFTALSLFAIL. The Cytoplasmic portion of the chain corresponds to 606 to 953; sequence RTPMDQIAST…KFSAYKWLAD (348 aa). In terms of domain architecture, ABC transporter spans 651–892; it reads FGFEDASMEW…NEFLRESINN (242 aa). Position 686–693 (686–693) interacts with ATP; the sequence is GPTGSGKS. Positions 892-901 are enriched in polar residues; the sequence is NDSKNTTHNQ. A disordered region spans residues 892 to 926; the sequence is NDSKNTTHNQIDLKRSTTSKKTKNGDPEGGNSQDE. A helical transmembrane segment spans residues 954-974; sequence YFGGLGVVFVFTSSSILIHGI. An ABC transmembrane type-1 2 domain is found at 961-1218; sequence VFVFTSSSIL…SSVMIIMKAS (258 aa). Topologically, residues 975–1013 are extracellular; that stretch reads TLSQGFWLRYWLDTGSSGSKSTWLYRIVEGHSNIYFLLT. Residues 1014-1034 form a helical membrane-spanning segment; the sequence is YIIIGLVSSFLTSGKVWIAII. Residues 1035 to 1082 are Cytoplasmic-facing; it reads SGTNVTKKIFAKLLSSILYAKLRFHNVTPTGRIMNRFSKDMDIIDQQL. Residues 1083-1105 traverse the membrane as a helical segment; the sequence is IPNFEGLSYSVVVCLWIILLIGY. Topologically, residues 1106–1109 are extracellular; the sequence is VTPQ. A helical transmembrane segment spans residues 1110 to 1132; that stretch reads FLLFAIPLCALYYTVCTLYLRAS. Over 1133–1197 the chain is Cytoplasmic; the sequence is RELKRIDNIN…NMATEWITYR (65 aa). A helical transmembrane segment spans residues 1198 to 1218; it reads VDIIGTLVLFSSSVMIIMKAS.

This sequence belongs to the ABC transporter superfamily. ABCC family. Conjugate transporter (TC 3.A.1.208) subfamily.

It is found in the membrane. The polypeptide is ABC transporter NFT1 (NFT1) (Saccharomyces cerevisiae (strain ATCC 204508 / S288c) (Baker's yeast)).